The primary structure comprises 197 residues: dITP/XTP pyrophosphatase (197 aa).

8–13 provides a ligand contact to substrate; it reads TGNVGK. Mg(2+) contacts are provided by glutamate 40 and aspartate 69. The active-site Proton acceptor is the aspartate 69. Substrate contacts are provided by residues serine 70, 154–157, lysine 177, and 182–183; these read FGYD and HR.

The protein belongs to the HAM1 NTPase family. Homodimer. Mg(2+) is required as a cofactor. Requires Mn(2+) as cofactor. The cofactor is Ni(2+).

It carries out the reaction XTP + H2O = XMP + diphosphate + H(+). The enzyme catalyses dITP + H2O = dIMP + diphosphate + H(+). The catalysed reaction is ITP + H2O = IMP + diphosphate + H(+). Its function is as follows. Pyrophosphatase that catalyzes the hydrolysis of nucleoside triphosphates to their monophosphate derivatives, with a high preference for the non-canonical purine nucleotides XTP (xanthosine triphosphate), dITP (deoxyinosine triphosphate) and ITP. Can also efficiently hydrolyze 2'-deoxy-N-6-hydroxylaminopurine triphosphate (dHAPTP). Seems to function as a house-cleaning enzyme that removes non-canonical purine nucleotides from the nucleotide pool, thus preventing their incorporation into DNA/RNA and avoiding chromosomal lesions. To a much lesser extent, is also able to hydrolyze GTP, dGTP and dUTP, but shows very low activity toward the canonical nucleotides dATP, dCTP and dTTP and toward 8-oxo-dGTP, purine deoxyribose triphosphate, 2-aminopurine deoxyribose triphosphate and 2,6-diaminopurine deoxyribose triphosphate. Genetic interactions among priB, dam, lexA, nagC, polA, rdgB, rdgB, rep and uup link the PriA-PriB replication restart pathway to DNA double-strand break repair. The sequence is that of dITP/XTP pyrophosphatase from Escherichia coli (strain K12).